We begin with the raw amino-acid sequence, 341 residues long: Vacuolar morphogenesis protein 7 homolog (341 aa).

Residues 1–115 (MALKIKIPET…KFLNIKDESE (115 aa)) form the PX domain. Positions 214–233 (NSPVAPPSASSQLNSSNPSS) are enriched in low complexity. Residues 214–265 (NSPVAPPSASSQLNSSNPSSPFRPLSASTDKQSNTSLNRVLGKNRMPETQTT) form a disordered region. Over residues 239–251 (SASTDKQSNTSLN) the composition is skewed to polar residues. A t-SNARE coiled-coil homology domain is found at 278–340 (NQTMEDQDMQ…HRTRAGLRKL (63 aa)).

As to quaternary structure, possibly multimeric.

The protein localises to the vacuole. In terms of biological role, essential for proper morphogenesis of the vacuole. May exist as structural reinforcement on the surface of the vacuolar membrane and be required for maintenance against rupture by osmotic pressure. In Schizosaccharomyces pombe (strain 972 / ATCC 24843) (Fission yeast), this protein is Vacuolar morphogenesis protein 7 homolog.